The following is a 158-amino-acid chain: MSYTVIYAGTFDPMTNGHLDIIERASELFGQVIVAVAKNPSKQPLFSLEERTALVRQSCAHLANVQAVGFSGLLADFAKQHQAKALVRGIRGSDDIEYEIQLAQLNDKLSGRLDTVFLPPSVTWRYLSSTMVREIYRHQGDVAQFVPNAVLCALKEKE.

A substrate-binding site is contributed by Thr-10. ATP is bound by residues 10 to 11 and His-18; that span reads TF. Lys-42, Leu-74, and Arg-88 together coordinate substrate. ATP-binding positions include 89–91, Glu-99, and 124–130; these read GIR and WRYLSST.

It belongs to the bacterial CoaD family. In terms of assembly, homohexamer. The cofactor is Mg(2+).

It is found in the cytoplasm. The enzyme catalyses (R)-4'-phosphopantetheine + ATP + H(+) = 3'-dephospho-CoA + diphosphate. It participates in cofactor biosynthesis; coenzyme A biosynthesis; CoA from (R)-pantothenate: step 4/5. Its function is as follows. Reversibly transfers an adenylyl group from ATP to 4'-phosphopantetheine, yielding dephospho-CoA (dPCoA) and pyrophosphate. This is Phosphopantetheine adenylyltransferase from Actinobacillus pleuropneumoniae serotype 3 (strain JL03).